A 521-amino-acid chain; its full sequence is Cell adhesion molecule CEACAM1 (521 aa).

Positions 1 to 34 (MELASAHLHKGQVPWGGLLLTASLLASWSPATTA) are cleaved as a signal peptide. The Ig-like V-type domain occupies 35–142 (EVTIEAVPPQ…QATVRFHVHP (108 aa)). At 35–428 (EVTIEAVPPQ…GGLSDGAIAG (394 aa)) the chain is on the extracellular side. Positions 39 to 142 (EAVPPQVAED…QATVRFHVHP (104 aa)) are required for homophilic binding. N-linked (GlcNAc...) asparagine glycans are attached at residues N71, N89, N104, N148, N152, N199, N206, N210, N226, N258, N290, N294, N304, N317, N333, and N375. 3 Ig-like C2-type domains span residues 147-234 (PNIT…FSLN), 239-319 (PDTP…KNIT), and 323-411 (PVTQ…IKLD). C167 and C217 are oxidised to a cystine. A disulfide bridge connects residues C261 and C301. An intrachain disulfide couples C346 to C394. A helical membrane pass occupies residues 429–447 (IVIGVVAGVALIAGLAYFL). Positions 445–457 (YFLYSRKSGGGSD) are interaction with calmodulin. Residues 447–521 (LYSRKSGGGS…ETVYSEVKKK (75 aa)) are interaction with FLNA. Residues 448 to 521 (YSRKSGGGSD…ETVYSEVKKK (74 aa)) are Cytoplasmic-facing. Positions 455–521 (GSDQRDLTEH…ETVYSEVKKK (67 aa)) are disordered. Residues 457 to 466 (DQRDLTEHKP) show a composition bias toward basic and acidic residues. A compositionally biased stretch (polar residues) spans 467-481 (STSNHNLAPSDNSPN). Residues 484–521 (DDVAYTVLNFNSQQPNRPTSAPSSPRATETVYSEVKKK) form a required for interaction with PTPN11 and PTPN6 and for control of phosphorylation level region. Y488 bears the Phosphotyrosine; by SRC, LCK, INSR and EGFR mark. Polar residues predominate over residues 491–514 (LNFNSQQPNRPTSAPSSPRATETV). At S503 the chain carries Phosphoserine. Residue Y515 is modified to Phosphotyrosine; by INSR, SRC and LCK. An essential for interaction with PTPN11 and PTPN6 region spans residues 515-518 (YSEV).

It belongs to the immunoglobulin superfamily. CEA family. (Microbial infection) Interacts with MHV S1 spike glycoprotein. In terms of assembly, monomer. Oligomer. Heterodimer. Homodimer. Cis-dimer/oligomer (via Ig-like C2-type and/or via cytoplasmic domains); induced by trans-homophilic cell adhesion through an allosteric mechanism transmitted by the Ig-like V-type domain, and is regulated by intracellular calcium and calmodulin. Interacts (via cytoplasmic domain) with calmodulin in a calcium dependent manner; reduces homophilic cell adhesion through dissociation of dimer. Isoform 1 interacts (via cytoplasmic domain) with PTPN11 (preferentially) and PTPN6; cis-homodimer form is preferred; this interaction is decreased by formation of isoform 1 / isoform 2 cis-heterodimers and is dependent on the monomer/dimer equilibrium; this interaction is phosphorylation-dependent. Isoform 1 interacts with LYN. Isoform 1 interacts (via cytoplasmic domain) with SRC (via SH2 domain); this interaction is regulated by trans-homophilic cell adhesion. Isoform 1 interacts with LCK; mediates phosphorylation at Tyr-488 and Tyr-515 resulting in PTPN6 association. Isoform 1 interacts with PTPN6; this interaction is phosphorylation-dependent and causes a profound decrease in TCR stimulation-induced CD247 and ZAP70 phosphorylation. Isoform 1 interacts with TCR/CD3 complex through TCR beta chain and CD3E; colocalizes at the cell surface and upon stimulation of the TCR/CD3 complex recruits PTPN6 in the TCR/CD3 complex, resulting in dephosphorylation of CD247 and ZAP70. Isoform 1 interacts (via cytoplasmic domain) with SHC1 (via SH2 domain); SHC1 mediates interaction with INSR or EGFR in a Ser-503 phosphorylation-dependent manner. Isoform 1 interacts with EGFR; the interaction is indirect. Isoform 1 interacts with CSF3R; down-regulates the CSF3R-STAT3 pathway through recruitment of PTPN6 that dephosphorylates CSF3R. Isoform 1 (phosphorylated form) interacts with TLR4 and SYK; recruits PTPN6 that dephosphorylates SYK, reducing the production of reactive oxygen species (ROS) and lysosome disruption, leading to a reduction of the inflammasome activity. Isoform 1 interacts with FLNA; inhibits cell migration and cell scattering by interfering with the interaction of FLNA with RALA. Isoform 1 interacts (via cytoplasmic domain) with PXN; the interaction is phosphotyrosyl-dependent. Isoform 1 interacts with KLRK1; recruits PTPN6 that dephosphorylates VAV1. Isoform 1 interacts with CEACAM8. Isoform 1 interacts with FASN; this interaction is insulin and phosphorylation-dependent; reduces fatty-acid synthase activity. Interacts (via Ig-like V-type) with HAVCR2 (via Ig-like V-type); facilitates the maturation and cell surface expression of HAVCR2 thereby regulating T-cell tolerance induction. Isoform 2 interacts (via the cytoplasmic domain) with ANXA2; this interaction is regulated by phosphorylation and appears in the AIIt complex. Interacts (via Lewis X moieties) with CD209 (via C-type lectin domain); this interaction is regulated by the glycosylation pattern of CEACAM1 on cell types and regulates contact between dendritic cells and neutrophils. Phosphorylated on serine and tyrosine. Isoform 1 is phosphorylated on tyrosine by Src family kinases like SRC and LCK and by receptor like CSF3R, EGFR and INSR upon stimulation. Phosphorylated at Ser-503; mediates activity. Phosphorylated at Tyr-488; regulates activity. Phosphorylated at Tyr-488 by EGFR and INSR upon stimulation; this phosphorylation is Ser-503-phosphorylation-dependent; mediates cellular internalization; increases interaction with FASN. Phosphorylated at Tyr-488 and Tyr-515 by LCK; mediates PTPN6 association and is regulated by homophilic ligation of CEACAM1 in the absence of T-cell activation. Phosphorylated at Tyr-515; mediates interaction with PTPN11. In terms of processing, phosphorylated on serine and threonine. In terms of tissue distribution, expressed in granulocytes, lymphocytes, granulocytes, B cells, and T-cells. Expressed in bone. Highly expressed in liver and femur. Highly expressed in neutrophils, and to a lesser extent inmonocytes, and macrophages. Slightly higher expressed in peripheral blood neutrophils (PBNs). Intestinal T-cells predominantly express isoform 2 while extraintestinal T-cells mainly express isoform 1. Expressed in small intestine and colon.

It localises to the cell membrane. Its subcellular location is the lateral cell membrane. The protein resides in the apical cell membrane. It is found in the basal cell membrane. The protein localises to the cell junction. It localises to the adherens junction. Its subcellular location is the cytoplasmic vesicle. The protein resides in the secretory vesicle. It is found in the cell projection. The protein localises to the microvillus membrane. Its function is as follows. Cell adhesion protein that mediates homophilic cell adhesion in a calcium-independent manner. Plays a role as coinhibitory receptor in immune response, insulin action and also functions as an activator during angiogenesis. Its coinhibitory receptor function is phosphorylation- and PTPN6 -dependent, which in turn, suppress signal transduction of associated receptors by dephosphorylation of their downstream effectors. Plays a role in immune response, of T-cells, natural killer (NK) and neutrophils. Upon TCR/CD3 complex stimulation, inhibits TCR-mediated cytotoxicity by blocking granule exocytosis by mediating homophilic binding to adjacent cells, allowing interaction with and phosphorylation by LCK and interaction with the TCR/CD3 complex which recruits PTPN6 resulting in dephosphorylation of CD247 and ZAP70. Also inhibits T-cell proliferation and cytokine production through inhibition of JNK cascade and plays a crucial role in regulating autoimmunity and anti-tumor immunity by inhibiting T-cell through its interaction with HAVCR2. Upon natural killer (NK) cells activation, inhibit KLRK1-mediated cytolysis of CEACAM1-bearing tumor cells by trans-homophilic interactions with CEACAM1 on the target cell and lead to cis-interaction between CEACAM1 and KLRK1, allowing PTPN6 recruitment and then VAV1 dephosphorylation. Upon neutrophils activation negatively regulates IL1B production by recruiting PTPN6 to a SYK-TLR4-CEACAM1 complex, that dephosphorylates SYK, reducing the production of reactive oxygen species (ROS) and lysosome disruption, which in turn, reduces the activity of the inflammasome. Down-regulates neutrophil production by acting as a coinhibitory receptor for CSF3R by downregulating the CSF3R-STAT3 pathway through recruitment of PTPN6 that dephosphorylates CSF3R. Also regulates insulin action by promoting INS clearance and regulating lipogenesis in liver through regulating insulin signaling. Upon INS stimulation, undergoes phosphorylation by INSR leading to INS clearance by increasing receptor-mediated insulin endocytosis. This inernalization promotes interaction with FASN leading to receptor-mediated insulin degradation and to reduction of FASN activity leading to negative regulation of fatty acid synthesis. INSR-mediated phosphorylation also provokes a down-regulation of cell proliferation through SHC1 interaction resulting in decrease coupling of SHC1 to the MAPK3/ERK1-MAPK1/ERK2 and phosphatidylinositol 3-kinase pathways. Functions as activator in angiogenesis by promoting blood vessel remodeling through endothelial cell differentiation and migration and in arteriogenesis by increasing the number of collateral arteries and collateral vessel calibers after ischemia. Also regulates vascular permeability through the VEGFR2 signaling pathway resulting in control of nitric oxide production. Down-regulates cell growth in response to EGF through its interaction with SHC1 that mediates interaction with EGFR resulting in decrease coupling of SHC1 to the MAPK3/ERK1-MAPK1/ERK2 pathway. Negatively regulates platelet aggregation by decreasing platelet adhesion on type I collagen through the GPVI-FcRgamma complex. Inhibits cell migration and cell scattering through interaction with FLNA; interferes with the interaction of FLNA with RALA. Mediates bile acid transport activity in a phosphorylation dependent manner. Negatively regulates osteoclastogenesis. In terms of biological role, cell adhesion protein that mediates homophilic cell adhesion in a calcium-independent manner. Promotes populations of T-cells regulating IgA production and secretion associated with control of the commensal microbiota and resistance to enteropathogens. Functionally, (Microbial infection) In case of murine coronavirus (MHV) infection, serves as receptor for MHV S1 spike glycoprotein. The polypeptide is Cell adhesion molecule CEACAM1 (Mus musculus (Mouse)).